The primary structure comprises 955 residues: Kinesin-like protein KIN-14L (955 aa).

The Calponin-homology (CH) domain maps to 19-140 (AARRFQAVQW…CILGLKAYHE (122 aa)). The Kinesin motor domain maps to 363–685 (NIRVYCRVRP…LKFAQRVSTV (323 aa)). Residue 445 to 452 (GQTGSGKT) participates in ATP binding. Residues 692–719 (AHKETREVMHLKEQIENLKRALGTEEWN) are a coiled coil. Positions 878–942 (RKENIPADPR…GKPIENGKKD (65 aa)) are disordered. Positions 894–916 (NNFSHIKSPDTSNAKTMRRQSLT) are enriched in polar residues.

The protein belongs to the TRAFAC class myosin-kinesin ATPase superfamily. Kinesin family. KIN-14 subfamily.

The sequence is that of Kinesin-like protein KIN-14L from Arabidopsis thaliana (Mouse-ear cress).